The following is a 670-amino-acid chain: DNA ligase (670 aa).

Residues 33 to 37, 82 to 83, and Glu-114 contribute to the NAD(+) site; these read DAEYD and SL. Lys-116 (N6-AMP-lysine intermediate) is an active-site residue. Residues Arg-137, Glu-173, Lys-291, and Lys-315 each coordinate NAD(+). Cys-409, Cys-412, Cys-427, and Cys-433 together coordinate Zn(2+). The BRCT domain occupies 592–670; sequence VQSDRLSGNT…ENALAELLSD (79 aa).

The protein belongs to the NAD-dependent DNA ligase family. LigA subfamily. It depends on Mg(2+) as a cofactor. The cofactor is Mn(2+).

The enzyme catalyses NAD(+) + (deoxyribonucleotide)n-3'-hydroxyl + 5'-phospho-(deoxyribonucleotide)m = (deoxyribonucleotide)n+m + AMP + beta-nicotinamide D-nucleotide.. DNA ligase that catalyzes the formation of phosphodiester linkages between 5'-phosphoryl and 3'-hydroxyl groups in double-stranded DNA using NAD as a coenzyme and as the energy source for the reaction. It is essential for DNA replication and repair of damaged DNA. In Idiomarina loihiensis (strain ATCC BAA-735 / DSM 15497 / L2-TR), this protein is DNA ligase.